We begin with the raw amino-acid sequence, 359 residues long: Quinolinate synthase (359 aa).

Positions 81 and 99 each coordinate iminosuccinate. Cys-144 lines the [4Fe-4S] cluster pocket. Iminosuccinate is bound by residues 170–172 (YVN) and Ser-187. A [4Fe-4S] cluster-binding site is contributed by Cys-229. Iminosuccinate contacts are provided by residues 255-257 (HPE) and Thr-272. Residue Cys-315 participates in [4Fe-4S] cluster binding.

This sequence belongs to the quinolinate synthase family. Type 2 subfamily. It depends on [4Fe-4S] cluster as a cofactor.

The protein resides in the cytoplasm. It carries out the reaction iminosuccinate + dihydroxyacetone phosphate = quinolinate + phosphate + 2 H2O + H(+). It functions in the pathway cofactor biosynthesis; NAD(+) biosynthesis; quinolinate from iminoaspartate: step 1/1. Catalyzes the condensation of iminoaspartate with dihydroxyacetone phosphate to form quinolinate. This Sinorhizobium fredii (strain NBRC 101917 / NGR234) protein is Quinolinate synthase.